Here is a 467-residue protein sequence, read N- to C-terminus: GTPase Der (467 aa).

2 consecutive EngA-type G domains span residues 3-167 and 179-352; these read PTLV…PYEE and PVIA…AAAR. Residues 9 to 16, 56 to 60, 119 to 122, 185 to 192, 232 to 236, and 297 to 300 contribute to the GTP site; these read GRPNVGKS, DTGGF, NKTE, DTAGL, and NKWD. The region spanning 353 to 437 is the KH-like domain; that stretch reads AHIPTPKLTR…PLRVEFRTGH (85 aa). The tract at residues 434–467 is disordered; it reads RTGHNPYAGKKTPLTEEEARRAHSRRRRNRKKYG. Positions 455–467 are enriched in basic residues; it reads AHSRRRRNRKKYG.

It belongs to the TRAFAC class TrmE-Era-EngA-EngB-Septin-like GTPase superfamily. EngA (Der) GTPase family. Associates with the 50S ribosomal subunit.

GTPase that plays an essential role in the late steps of ribosome biogenesis. In Nitrosomonas europaea (strain ATCC 19718 / CIP 103999 / KCTC 2705 / NBRC 14298), this protein is GTPase Der.